The following is a 201-amino-acid chain: Small ribosomal subunit protein uS4 (201 aa).

Residues 93–155 (CRLDNIVYRM…SKSLSMFEVN (63 aa)) form the S4 RNA-binding domain.

The protein belongs to the universal ribosomal protein uS4 family. In terms of assembly, part of the 30S ribosomal subunit. Contacts protein S5. The interaction surface between S4 and S5 is involved in control of translational fidelity.

Functionally, one of the primary rRNA binding proteins, it binds directly to 16S rRNA where it nucleates assembly of the body of the 30S subunit. Its function is as follows. With S5 and S12 plays an important role in translational accuracy. In Elusimicrobium minutum (strain Pei191), this protein is Small ribosomal subunit protein uS4.